We begin with the raw amino-acid sequence, 372 residues long: N-methyl-L-tryptophan oxidase (372 aa).

An FAD-binding site is contributed by 4–34 (DLIIIGSGSVGAAAGYYATRAGLKVLMTDAH). Position 307 is an S-8alpha-FAD cysteine (C307).

It belongs to the MSOX/MTOX family. MTOX subfamily. Monomer. FAD serves as cofactor.

The catalysed reaction is N(alpha)-methyl-L-tryptophan + O2 + H2O = L-tryptophan + formaldehyde + H2O2. Functionally, catalyzes the oxidative demethylation of N-methyl-L-tryptophan. This is N-methyl-L-tryptophan oxidase from Salmonella agona (strain SL483).